The following is a 112-amino-acid chain: Secretoglobin family 2B member 24 (112 aa).

An N-terminal signal peptide occupies residues 1–23 (MKGTLLLLALLMIGELGFHTTEA).

Belongs to the secretoglobin family. In terms of tissue distribution, expressed in lacrimal gland, at higher level in males than females.

The protein localises to the secreted. The polypeptide is Secretoglobin family 2B member 24 (Scgb2b24) (Mus musculus (Mouse)).